The chain runs to 518 residues: Glutamate--cysteine ligase (518 aa).

This sequence belongs to the glutamate--cysteine ligase type 1 family. Type 1 subfamily.

The catalysed reaction is L-cysteine + L-glutamate + ATP = gamma-L-glutamyl-L-cysteine + ADP + phosphate + H(+). It participates in sulfur metabolism; glutathione biosynthesis; glutathione from L-cysteine and L-glutamate: step 1/2. This chain is Glutamate--cysteine ligase, found in Cronobacter sakazakii (strain ATCC BAA-894) (Enterobacter sakazakii).